The chain runs to 177 residues: Large ribosomal subunit protein uL6 (177 aa).

The protein belongs to the universal ribosomal protein uL6 family. As to quaternary structure, part of the 50S ribosomal subunit.

In terms of biological role, this protein binds to the 23S rRNA, and is important in its secondary structure. It is located near the subunit interface in the base of the L7/L12 stalk, and near the tRNA binding site of the peptidyltransferase center. The polypeptide is Large ribosomal subunit protein uL6 (Sodalis glossinidius (strain morsitans)).